A 369-amino-acid chain; its full sequence is Glutamate 5-kinase (369 aa).

Lys9 is a binding site for ATP. 3 residues coordinate substrate: Ser49, Asp136, and Asn148. ATP-binding positions include 168–169 (TD) and 210–216 (TGGMLTK). Positions 275 to 355 (RGGVYVDEGA…KGVFIHRDDW (81 aa)) constitute a PUA domain.

This sequence belongs to the glutamate 5-kinase family.

It localises to the cytoplasm. It carries out the reaction L-glutamate + ATP = L-glutamyl 5-phosphate + ADP. It participates in amino-acid biosynthesis; L-proline biosynthesis; L-glutamate 5-semialdehyde from L-glutamate: step 1/2. Catalyzes the transfer of a phosphate group to glutamate to form L-glutamate 5-phosphate. This Neisseria meningitidis serogroup A / serotype 4A (strain DSM 15465 / Z2491) protein is Glutamate 5-kinase.